Reading from the N-terminus, the 132-residue chain is Small ribosomal subunit protein uS8 (132 aa).

This sequence belongs to the universal ribosomal protein uS8 family. Part of the 30S ribosomal subunit. Contacts proteins S5 and S12.

Its function is as follows. One of the primary rRNA binding proteins, it binds directly to 16S rRNA central domain where it helps coordinate assembly of the platform of the 30S subunit. This is Small ribosomal subunit protein uS8 from Mycoplasmopsis pulmonis (strain UAB CTIP) (Mycoplasma pulmonis).